Here is a 75-residue protein sequence, read N- to C-terminus: UPF0235 protein Ava_3894 (75 aa).

The segment at 1 to 32 (MQKKVKVKPNSKQQKIAEQDDGSLTVHLKSPP) is disordered.

It belongs to the UPF0235 family.

The sequence is that of UPF0235 protein Ava_3894 from Trichormus variabilis (strain ATCC 29413 / PCC 7937) (Anabaena variabilis).